The primary structure comprises 472 residues: Ribosomal protein uS12 methylthiotransferase RimO (472 aa).

Residues 1 to 114 (MKFHIITLGC…IGDVVDTLQR (114 aa)) enclose the MTTase N-terminal domain. Residues C10, C46, C78, C171, C175, and C178 each coordinate [4Fe-4S] cluster. The Radical SAM core domain maps to 157 to 388 (RITGPSAYLK…MRLQQGISRQ (232 aa)). Residues 391-460 (RRWVGRVIRV…DYDLWGEMVE (70 aa)) form the TRAM domain.

The protein belongs to the methylthiotransferase family. RimO subfamily. The cofactor is [4Fe-4S] cluster.

It localises to the cytoplasm. It catalyses the reaction L-aspartate(89)-[ribosomal protein uS12]-hydrogen + (sulfur carrier)-SH + AH2 + 2 S-adenosyl-L-methionine = 3-methylsulfanyl-L-aspartate(89)-[ribosomal protein uS12]-hydrogen + (sulfur carrier)-H + 5'-deoxyadenosine + L-methionine + A + S-adenosyl-L-homocysteine + 2 H(+). Catalyzes the methylthiolation of an aspartic acid residue of ribosomal protein uS12. The chain is Ribosomal protein uS12 methylthiotransferase RimO from Roseiflexus sp. (strain RS-1).